Here is a 298-residue protein sequence, read N- to C-terminus: Myoblast determination protein 1 homolog (298 aa).

Over residues 53-73 (PEEHPHTRAPPREPTEEEHVR) the composition is skewed to basic and acidic residues. The tract at residues 53–77 (PEEHPHTRAPPREPTEEEHVRAPSG) is disordered. One can recognise a bHLH domain in the interval 100-151 (DRRKAATMRERRRLSKVNEAFETLKRCTSTNPNQRLPKVEILRNAIRYIESL). Disordered stretches follow at residues 170 to 220 (SGES…GKSS) and 242 to 298 (CPIL…YQVL). Composition is skewed to polar residues over residues 173–183 (SDASSPRSNCS) and 257–284 (CSPQ…LPQE).

As to quaternary structure, efficient DNA binding requires dimerization with another bHLH protein. Seems to form active heterodimers with ITF-2.

It is found in the nucleus. Its function is as follows. Acts as a transcriptional activator that promotes transcription of muscle-specific target genes and plays a role in muscle differentiation. Induces fibroblasts to differentiate into myoblasts. Interacts with and is inhibited by the twist protein. This interaction probably involves the basic domains of both proteins. This Gallus gallus (Chicken) protein is Myoblast determination protein 1 homolog (MYOD1).